The following is a 191-amino-acid chain: Glutathione-dependent formaldehyde-activating enzyme (191 aa).

Residues 22-169 enclose the CENP-V/GFA domain; sequence FQGGTLECHC…LTELGLPPYD (148 aa). Zn(2+)-binding residues include cysteine 29, cysteine 31, cysteine 50, cysteine 52, cysteine 55, cysteine 97, and cysteine 100.

Belongs to the Gfa family. It depends on Zn(2+) as a cofactor.

The catalysed reaction is S-(hydroxymethyl)glutathione = glutathione + formaldehyde. The protein operates within one-carbon metabolism; formaldehyde degradation; formate from formaldehyde (glutathione route): step 1/3. In terms of biological role, catalyzes the condensation of formaldehyde and glutathione to S-hydroxymethylglutathione. The chain is Glutathione-dependent formaldehyde-activating enzyme from Xanthomonas axonopodis pv. citri (strain 306).